Here is a 393-residue protein sequence, read N- to C-terminus: Leucine aminopeptidase 1 (393 aa).

A signal peptide spans 1-18; that stretch reads MKLSQVSALAACVPAATA. A propeptide spanning residues 19–84 is cleaved from the precursor; it reads RFVELMEADH…GSQGLRIKES (66 aa). Residue N176 is glycosylated (N-linked (GlcNAc...) asparagine). Zn(2+) is bound by residues H184, D202, E241, and D268. Cysteines 317 and 321 form a disulfide. H350 contacts Zn(2+).

This sequence belongs to the peptidase M28 family. M28E subfamily. As to quaternary structure, monomer. Requires Zn(2+) as cofactor.

It is found in the secreted. Its function is as follows. Extracellular aminopeptidase that allows assimilation of proteinaceous substrates. The protein is Leucine aminopeptidase 1 (LAP1) of Metarhizium robertsii (strain ARSEF 23 / ATCC MYA-3075) (Metarhizium anisopliae (strain ARSEF 23)).